We begin with the raw amino-acid sequence, 138 residues long: Enhancer of split malpha protein (138 aa).

This sequence belongs to the M4-like protein family.

In terms of biological role, part of the Notch signaling pathway. The polypeptide is Enhancer of split malpha protein (Drosophila melanogaster (Fruit fly)).